Reading from the N-terminus, the 224-residue chain is C-&gt;U-editing enzyme APOBEC-2 (224 aa).

Residues 1–24 (MAQKEEAAVATEAASQNGEDLENL) form a disordered region. Residues Glu-60 and His-98 each coordinate Zn(2+). A CMP/dCMP-type deaminase domain is found at 64–169 (GRNKTFLCYV…PEIQAALKKL (106 aa)). Glu-100 (proton donor) is an active-site residue. Positions 128 and 131 each coordinate Zn(2+).

This sequence belongs to the cytidine and deoxycytidylate deaminase family. As to quaternary structure, homotetramer. The cofactor is Zn(2+). As to expression, expressed exclusively in heart and skeletal muscle.

It carries out the reaction cytidine(6666) in apoB mRNA + H2O + H(+) = uridine(6666) in apoB mRNA + NH4(+). Its function is as follows. Probable C to U editing enzyme whose physiological substrate is not yet known. Does not display detectable apoB mRNA editing. Has a low intrinsic cytidine deaminase activity. May play a role in the epigenetic regulation of gene expression through the process of active DNA demethylation. The polypeptide is C-&gt;U-editing enzyme APOBEC-2 (APOBEC2) (Homo sapiens (Human)).